Here is a 308-residue protein sequence, read N- to C-terminus: Transaldolase (308 aa).

Lysine 125 (schiff-base intermediate with substrate) is an active-site residue.

It belongs to the transaldolase family. Type 1 subfamily. As to quaternary structure, homodimer.

Its subcellular location is the cytoplasm. It carries out the reaction D-sedoheptulose 7-phosphate + D-glyceraldehyde 3-phosphate = D-erythrose 4-phosphate + beta-D-fructose 6-phosphate. Its pathway is carbohydrate degradation; pentose phosphate pathway; D-glyceraldehyde 3-phosphate and beta-D-fructose 6-phosphate from D-ribose 5-phosphate and D-xylulose 5-phosphate (non-oxidative stage): step 2/3. Transaldolase is important for the balance of metabolites in the pentose-phosphate pathway. This Ectopseudomonas mendocina (strain ymp) (Pseudomonas mendocina) protein is Transaldolase.